We begin with the raw amino-acid sequence, 363 residues long: Regulator of G-protein signaling rgs-3 (363 aa).

Residues 1–70 form a disordered region; sequence MWRSYKAETP…NSSATSPTPS (70 aa). Residues 21 to 35 are compositionally biased toward basic and acidic residues; it reads LNLHDSSESDHEGRQ. Low complexity-rich tracts occupy residues 36-50 and 58-70; these read SRSA…APAS and PITN…PTPS. RGS domains follow at residues 112-225 and 240-359; these read NCAN…LEYL and SFEG…IDLL.

In terms of processing, may be phosphorylated and activated by egl-4.

Functionally, modulates chemotaxis responses by regulating positively the sensitivity to CO2 levels in BAG neurons and by regulating negatively the sensitivity to quinine in ASH sensory neurons. This chain is Regulator of G-protein signaling rgs-3 (rgs-3), found in Caenorhabditis elegans.